Consider the following 357-residue polypeptide: Peptide chain release factor 1 (357 aa).

Position 236 is an N5-methylglutamine (Q236).

Belongs to the prokaryotic/mitochondrial release factor family. Methylated by PrmC. Methylation increases the termination efficiency of RF1.

It is found in the cytoplasm. Functionally, peptide chain release factor 1 directs the termination of translation in response to the peptide chain termination codons UAG and UAA. The chain is Peptide chain release factor 1 from Mycolicibacterium vanbaalenii (strain DSM 7251 / JCM 13017 / BCRC 16820 / KCTC 9966 / NRRL B-24157 / PYR-1) (Mycobacterium vanbaalenii).